Reading from the N-terminus, the 1075-residue chain is Flocculation protein FLO5 (1075 aa).

Residues 1–24 form the signal peptide; that stretch reads MTIAHHCIFLVILAFLALINVASG. One can recognise a PA14 domain in the interval 74–249; it reads GGQTDISIDY…GTTVSDNFEG (176 aa). N-linked (GlcNAc...) asparagine glycosylation is found at Asn-135, Asn-187, Asn-203, and Asn-262. Residues 197-240 form a sugar recognition region; it reads DGSLPDNITGTVYMYAGYYYPLKVVYSNAVSWGTLPISVELPDG. 8 repeat units span residues 278–322, 323–367, 368–412, 413–457, 458–502, 503–547, 548–592, and 593–637. The segment at 278-637 is 8 X 45 AA approximate tandem repeats, Thr-rich; the sequence is TTTEPWTGTF…RTPTTAISSS (360 aa). Composition is skewed to low complexity over residues 322–345, 367–390, 457–480, and 547–570; these read TTTT…VTGT. Disordered stretches follow at residues 322 to 349, 366 to 394, 456 to 484, and 546 to 574; these read TTTT…NGQP and ITTT…NGQP. A glycan (N-linked (GlcNAc...) asparagine) is linked at Asn-663. 2 consecutive repeat copies span residues 667-686 and 687-706. The 2 X 20 AA approximate tandem repeats, Ser-rich stretch occupies residues 667-706; the sequence is VISSSVISSSVTSSLVTSSSFISSSVISSSTTTSTSIFSE. A compositionally biased stretch (low complexity) spans 702 to 762; sequence SIFSESSTSS…SLPPVTSATT (61 aa). Positions 702–781 are disordered; the sequence is SIFSESSTSS…PATTTKTSEQ (80 aa). Asn-749 carries an N-linked (GlcNAc...) asparagine glycan. The span at 763 to 781 shows a compositional bias: polar residues; the sequence is GQETASSLPPATTTKTSEQ. 3 consecutive repeat copies span residues 775-825, 847-897, and 898-948. A 3 X 51 AA approximate repeats, Ser/Thr-rich region spans residues 775 to 948; sequence TTKTSEQTTL…TVYPTWRPQT (174 aa). A compositionally biased stretch (polar residues) spans 948–958; sequence TTNEQSVSSKM. 2 disordered regions span residues 948-980 and 1016-1038; these read TTNE…AVTS and SLTS…SSMV. Composition is skewed to low complexity over residues 959 to 977 and 1016 to 1026; these read NSAT…TKTA and SLTSSGLSTMS. Residues 1027–1038 are compositionally biased toward polar residues; sequence QQPRSTPASSMV. Gly-1052 carries GPI-anchor amidated glycine lipidation. The propeptide at 1053-1075 is removed in mature form; the sequence is SANSLLAGSGLSVFIASLLLAII.

Belongs to the flocculin family. Extensively O-glycosylated. In terms of processing, the GPI-anchor is attached to the protein in the endoplasmic reticulum and serves to target the protein to the cell surface. There, the glucosamine-inositol phospholipid moiety is cleaved off and the GPI-modified mannoprotein is covalently attached via its lipidless GPI glycan remnant to the 1,6-beta-glucan of the outer cell wall layer.

It is found in the secreted. Its subcellular location is the cell wall. The protein resides in the membrane. In terms of biological role, cell wall protein that participates directly in adhesive cell-cell interactions during yeast flocculation, a reversible, asexual and Ca(2+)-dependent process in which cells adhere to form aggregates (flocs) consisting of thousands of cells. The lectin-like protein sticks out of the cell wall of flocculent cells and selectively binds mannose residues in the cell walls of adjacent cells. Activity is inhibited by mannose, but not by glucose, maltose, sucrose or galactose. The sequence is that of Flocculation protein FLO5 (FLO5) from Saccharomyces cerevisiae (strain ATCC 204508 / S288c) (Baker's yeast).